Reading from the N-terminus, the 265-residue chain is S-adenosylmethionine decarboxylase proenzyme (265 aa).

The active-site Schiff-base intermediate with substrate; via pyruvic acid is the Ser114. Ser114 carries the post-translational modification Pyruvic acid (Ser); by autocatalysis. His119 functions as the Proton acceptor; for processing activity in the catalytic mechanism. The active-site Proton donor; for catalytic activity is Cys142.

The protein belongs to the prokaryotic AdoMetDC family. Type 2 subfamily. In terms of assembly, heterooctamer of four alpha and four beta chains arranged as a tetramer of alpha/beta heterodimers. The cofactor is pyruvate. Post-translationally, is synthesized initially as an inactive proenzyme. Formation of the active enzyme involves a self-maturation process in which the active site pyruvoyl group is generated from an internal serine residue via an autocatalytic post-translational modification. Two non-identical subunits are generated from the proenzyme in this reaction, and the pyruvate is formed at the N-terminus of the alpha chain, which is derived from the carboxyl end of the proenzyme. The post-translation cleavage follows an unusual pathway, termed non-hydrolytic serinolysis, in which the side chain hydroxyl group of the serine supplies its oxygen atom to form the C-terminus of the beta chain, while the remainder of the serine residue undergoes an oxidative deamination to produce ammonia and the pyruvoyl group blocking the N-terminus of the alpha chain.

It carries out the reaction S-adenosyl-L-methionine + H(+) = S-adenosyl 3-(methylsulfanyl)propylamine + CO2. It functions in the pathway amine and polyamine biosynthesis; S-adenosylmethioninamine biosynthesis; S-adenosylmethioninamine from S-adenosyl-L-methionine: step 1/1. Functionally, catalyzes the decarboxylation of S-adenosylmethionine to S-adenosylmethioninamine (dcAdoMet), the propylamine donor required for the synthesis of the polyamines spermine and spermidine from the diamine putrescine. This chain is S-adenosylmethionine decarboxylase proenzyme, found in Buchnera aphidicola subsp. Acyrthosiphon pisum (strain APS) (Acyrthosiphon pisum symbiotic bacterium).